A 118-amino-acid polypeptide reads, in one-letter code: Large ribosomal subunit protein bL20 (118 aa).

This sequence belongs to the bacterial ribosomal protein bL20 family.

In terms of biological role, binds directly to 23S ribosomal RNA and is necessary for the in vitro assembly process of the 50S ribosomal subunit. It is not involved in the protein synthesizing functions of that subunit. The sequence is that of Large ribosomal subunit protein bL20 from Desulfotalea psychrophila (strain LSv54 / DSM 12343).